We begin with the raw amino-acid sequence, 295 residues long: Dual specificity protein phosphatase 15 (295 aa).

The 141-residue stretch at 1–141 folds into the Tyrosine-protein phosphatase domain; it reads MTEGVLPGLY…LEEFGWASSQ (141 aa). Threonine 2 carries N-myristoyl glycine lipidation. Cysteine 85 functions as the Phosphocysteine intermediate in the catalytic mechanism. A compositionally biased stretch (polar residues) spans 251–270; sequence SSSCTLSASTERPDGSSTPG. A disordered region spans residues 251 to 272; sequence SSSCTLSASTERPDGSSTPGNP.

Belongs to the protein-tyrosine phosphatase family. Non-receptor class dual specificity subfamily. In terms of tissue distribution, highly expressed in testis. Expressed in brain; up-regulated in patients with multiple sclerosis gray matter lesions.

It is found in the cytoplasm. Its subcellular location is the cell membrane. The catalysed reaction is O-phospho-L-tyrosyl-[protein] + H2O = L-tyrosyl-[protein] + phosphate. It carries out the reaction O-phospho-L-seryl-[protein] + H2O = L-seryl-[protein] + phosphate. It catalyses the reaction O-phospho-L-threonyl-[protein] + H2O = L-threonyl-[protein] + phosphate. Its function is as follows. May dephosphorylate MAPK13, ATF2, ERBB3, PDGFRB and SNX6. May play a role in the regulation of oligodendrocyte differentiation. May play a role in the regulation of myelin formation. Involved in the regulation of Erk1/2 phosphorylation in Schwann cells; the signaling may be linked to the regulation of myelination. This is Dual specificity protein phosphatase 15 from Homo sapiens (Human).